Consider the following 402-residue polypeptide: Oligopeptide transport ATP-binding protein OppD (402 aa).

The 288-residue stretch at 22-309 (LDITDLHVNF…PLHPYTWALI (288 aa)) folds into the ABC transporter domain. ATP is bound at residue 58–65 (GESGSGKS).

It belongs to the ABC transporter superfamily. In terms of assembly, the complex is composed of two ATP-binding proteins (OppD and OppF), two transmembrane proteins (OppB and OppC) and a solute-binding protein (OppA).

It is found in the cell membrane. It carries out the reaction a [peptide](out) + ATP + H2O = a [peptide](in) + ADP + phosphate + H(+). Part of the ABC transporter complex OppABCDF involved in the uptake of oligopeptides. Probably responsible for energy coupling to the transport system. The sequence is that of Oligopeptide transport ATP-binding protein OppD (oppD) from Mycoplasma genitalium (strain ATCC 33530 / DSM 19775 / NCTC 10195 / G37) (Mycoplasmoides genitalium).